The sequence spans 892 residues: Putative GTP diphosphokinase RSH1, chloroplastic (892 aa).

A chloroplast-targeting transit peptide spans 1–52; the sequence is MQPPTGAVSGSSSSSLECVSSCRTSWRGGGRPYECSVLSCAWNAPRALTGAL. The HD domain occupies 184–291; that stretch reads FIIHPVEVAR…VKLADRLHNM (108 aa). The TGS domain maps to 574 to 637; it reads LGSRVFVFTP…ANAEVVEIII (64 aa). Residues 809-880 enclose the ACT domain; it reads WLCIVCVDRK…MILGVLGWSV (72 aa).

It belongs to the RelA/SpoT family.

The protein resides in the plastid. It localises to the chloroplast. It carries out the reaction GTP + ATP = guanosine 3'-diphosphate 5'-triphosphate + AMP. Functionally, may be involved in a rapid plant ppGpp (guanosine 3'-diphosphate 5'-diphosphate)-mediated response to pathogens and other stresses. The chain is Putative GTP diphosphokinase RSH1, chloroplastic (RSH1) from Oryza sativa subsp. japonica (Rice).